The chain runs to 385 residues: S-adenosylmethionine synthase (385 aa).

His15 is a binding site for ATP. Asp17 serves as a coordination point for Mg(2+). Glu43 serves as a coordination point for K(+). L-methionine-binding residues include Glu56 and Gln99. A flexible loop region spans residues 99–109; it reads QSPEIAQGVDE. ATP-binding positions include 164–166, 230–231, Asp239, 245–246, Ala262, and Lys266; these read DAK, RF, and RK. Asp239 contacts L-methionine. Lys270 lines the L-methionine pocket.

This sequence belongs to the AdoMet synthase family. Homotetramer; dimer of dimers. Mg(2+) serves as cofactor. It depends on K(+) as a cofactor.

The protein localises to the cytoplasm. It catalyses the reaction L-methionine + ATP + H2O = S-adenosyl-L-methionine + phosphate + diphosphate. The protein operates within amino-acid biosynthesis; S-adenosyl-L-methionine biosynthesis; S-adenosyl-L-methionine from L-methionine: step 1/1. Its function is as follows. Catalyzes the formation of S-adenosylmethionine (AdoMet) from methionine and ATP. The overall synthetic reaction is composed of two sequential steps, AdoMet formation and the subsequent tripolyphosphate hydrolysis which occurs prior to release of AdoMet from the enzyme. The sequence is that of S-adenosylmethionine synthase from Hydrogenovibrio crunogenus (strain DSM 25203 / XCL-2) (Thiomicrospira crunogena).